A 538-amino-acid polypeptide reads, in one-letter code: CTP synthase (538 aa).

The amidoligase domain stretch occupies residues 1–267; sequence MDRAKFIFVT…LTPIARRFNL (267 aa). Serine 15 lines the CTP pocket. Serine 15 lines the UTP pocket. Residues 16–21 and aspartate 73 contribute to the ATP site; that span reads SLGKGI. Positions 73 and 141 each coordinate Mg(2+). CTP contacts are provided by residues 148–150, 188–193, and lysine 224; these read DME and KTKPTQ. UTP-binding positions include 188 to 193 and lysine 224; that span reads KTKPTQ. The region spanning 292–538 is the Glutamine amidotransferase type-1 domain; the sequence is KIGFVGKYLS…DFIKSALSKS (247 aa). L-glutamine is bound at residue glycine 351. Residue cysteine 378 is the Nucleophile; for glutamine hydrolysis of the active site. L-glutamine is bound by residues 379–382, glutamate 402, and arginine 469; that span reads LGMQ. Catalysis depends on residues histidine 513 and glutamate 515.

This sequence belongs to the CTP synthase family. As to quaternary structure, homotetramer.

It catalyses the reaction UTP + L-glutamine + ATP + H2O = CTP + L-glutamate + ADP + phosphate + 2 H(+). It carries out the reaction L-glutamine + H2O = L-glutamate + NH4(+). The enzyme catalyses UTP + NH4(+) + ATP = CTP + ADP + phosphate + 2 H(+). It functions in the pathway pyrimidine metabolism; CTP biosynthesis via de novo pathway; CTP from UDP: step 2/2. Allosterically activated by GTP, when glutamine is the substrate; GTP has no effect on the reaction when ammonia is the substrate. The allosteric effector GTP functions by stabilizing the protein conformation that binds the tetrahedral intermediate(s) formed during glutamine hydrolysis. Inhibited by the product CTP, via allosteric rather than competitive inhibition. Functionally, catalyzes the ATP-dependent amination of UTP to CTP with either L-glutamine or ammonia as the source of nitrogen. Regulates intracellular CTP levels through interactions with the four ribonucleotide triphosphates. The protein is CTP synthase of Helicobacter pylori (strain HPAG1).